A 254-amino-acid chain; its full sequence is uncharacterized protein (254 aa).

The next 8 helical transmembrane spans lie at 41–61 (LFVF…IKII), 64–84 (ILQA…EYFF), 91–111 (IYCG…LYIL), 125–145 (LLIS…FVLA), 146–166 (PAAL…LWSF), 172–192 (FILL…IQLL), 204–224 (MIRA…ILTP), and 232–252 (LIMS…LLVL).

It belongs to the TatC family.

Its subcellular location is the plastid. The protein localises to the chloroplast membrane. This is an uncharacterized protein from Pyropia yezoensis (Susabi-nori).